A 469-amino-acid polypeptide reads, in one-letter code: MNKGRVTQIMGPVVDVKFDGGKLPEIYNALTVKQSNENGASINLTFEVALHLGDDTVRTVAMSSTDGLVRGTEVEDTGKAISVPVGDVTLGRVFNVLGDAIDLDGDVPADVRRDPIHRQAPAFEELSTKVEILETGIKVVDLLAPYIKGGKIGLFGGAGVGKTVLIQELINNIAQEHGGISVFAGVGERTREGNDLYHEMSDSGVIKKTAMVFGQMNEPPGARQRVALTGLTMAEHFRDEQGQDVLLFIDNIFRFTQAGSEVSALLGRMPSAVGYQPTLATEMGQLQERITSTNKGSITSIQAVYVPADDYTDPAPATTFAHLDATTNLERRLTQMGIYPAVDPLASTSRALSPEIVGEEHYEVARQVQQTLQRYKELQDIIAILGMDELSEEDKLVVHRARRIQFFLSQNFHVAEQFTGQKGSYVPVKNTVSGFKEILEGKYDDLPEDAFRLVGSIEEVIENAKKMMA.

Position 156 to 163 (156 to 163 (GGAGVGKT)) interacts with ATP.

It belongs to the ATPase alpha/beta chains family. F-type ATPases have 2 components, CF(1) - the catalytic core - and CF(0) - the membrane proton channel. CF(1) has five subunits: alpha(3), beta(3), gamma(1), delta(1), epsilon(1). CF(0) has three main subunits: a(1), b(2) and c(9-12). The alpha and beta chains form an alternating ring which encloses part of the gamma chain. CF(1) is attached to CF(0) by a central stalk formed by the gamma and epsilon chains, while a peripheral stalk is formed by the delta and b chains.

Its subcellular location is the cell membrane. It catalyses the reaction ATP + H2O + 4 H(+)(in) = ADP + phosphate + 5 H(+)(out). In terms of biological role, produces ATP from ADP in the presence of a proton gradient across the membrane. The catalytic sites are hosted primarily by the beta subunits. The sequence is that of ATP synthase subunit beta from Bacillus mycoides (strain KBAB4) (Bacillus weihenstephanensis).